The following is a 527-amino-acid chain: Putative BTB/POZ domain and WD-repeat protein R783 (527 aa).

The region spanning 45 to 115 (TDVTIVLDDG…FYSQNTDTRN (71 aa)) is the BTB domain. WD repeat units lie at residues 215-266 (IHGD…VEAS), 272-310 (NVKT…LIKT), 313-353 (KHKN…IVRC), 355-391 (ISPV…FLFK), and 436-476 (YCPS…DNKY).

It belongs to the mimivirus BTB/WD family.

This Acanthamoeba polyphaga (Amoeba) protein is Putative BTB/POZ domain and WD-repeat protein R783.